Consider the following 185-residue polypeptide: Small ribosomal subunit protein uS5 (185 aa).

The region spanning 18-81 (FVDKLVHINR…ESAKRALIRV (64 aa)) is the S5 DRBM domain. The interval 157-185 (SPRSVAARRGIKVSQLQSRRRVEDAEATD) is disordered. The segment covering 176–185 (RRVEDAEATD) has biased composition (basic and acidic residues).

This sequence belongs to the universal ribosomal protein uS5 family. Part of the 30S ribosomal subunit. Contacts proteins S4 and S8.

Functionally, with S4 and S12 plays an important role in translational accuracy. Its function is as follows. Located at the back of the 30S subunit body where it stabilizes the conformation of the head with respect to the body. This Xanthobacter autotrophicus (strain ATCC BAA-1158 / Py2) protein is Small ribosomal subunit protein uS5.